We begin with the raw amino-acid sequence, 115 residues long: Large ribosomal subunit protein bL19 (115 aa).

This sequence belongs to the bacterial ribosomal protein bL19 family.

This protein is located at the 30S-50S ribosomal subunit interface and may play a role in the structure and function of the aminoacyl-tRNA binding site. The chain is Large ribosomal subunit protein bL19 from Klebsiella pneumoniae (strain 342).